A 394-amino-acid chain; its full sequence is Proliferation-associated protein 2G4 (394 aa).

Position 2 is an N-acetylserine (serine 2). A Phosphoserine modification is found at serine 2. Residues 2–48 (SGEDEQQEQTIAEDLVVTKYKMGGDIANRVLRSLVEASSSGVSVLSL) are necessary for nucleolar localization. An RNA-binding region spans residues 46–54 (LSLCEKGDA). Residue lysine 298 forms a Glycyl lysine isopeptide (Lys-Gly) (interchain with G-Cter in SUMO2) linkage. Positions 301–394 (LLQPFNVLYE…ETLEENGAGD (94 aa)) are necessary for nucleolar localization. Serine 335 carries the post-translational modification Phosphoserine. The tract at residues 358 to 394 (LQSSASRKTQKKKKKKASKTAENATSGETLEENGAGD) is disordered. Phosphoserine; by PKC/PRKCD is present on serine 361. The segment at 361-375 (SASRKTQKKKKKKAS) is interaction with RNA. Over residues 365–375 (KTQKKKKKKAS) the composition is skewed to basic residues. 2 positions are modified to phosphothreonine: threonine 366 and threonine 386.

The protein belongs to the peptidase M24 family. As to quaternary structure, isoform 2 interacts with the cytoplasmic domain of non-phosphorylated ERBB3; the interaction requires PKC activity. Interacts with AR. Treatment with HRG leads to dissociation from ERBB3 and increases association with AR. Interacts with nucleolin/NCL. Component of a ribonucleoprotein complex containing at least PA2G4, NCL, TOP1, PABPC2, RPLP0, acetylated histone H1 (HIST1H1A or H1F1), histone H1 2/4, RPL4, RPL8, RPL15, RPL18, RPL18A, RPL21, RPL11, RPL12, RPL28, RPL27, RPLP2 and RPL24. Interacts with HDAC2. Interacts with RB1; the interaction is enhanced upon PA2G4 dephosphorylation. Isoform 1 and isoform 2 interact with RNF20. Isoform 2 interacts with HUWE1. Interacts with AKT1. Interacts with DNAJC21. Phosphorylated on serine and threonine residues. Phosphorylation is enhanced by HRG treatment. Basal phosphorylation is PKC-dependent and HRG-induced phosphorylation is predominantly PKC-independent. Phosphorylation at Ser-361 by PKC/PRKCD regulates its nucleolar localization. Post-translationally, isoform 2 is polyubiquitinated, leading to proteasomal degradation and phosphorylation by PKC/PRKCD enhances polyubiquitination.

The protein localises to the cytoplasm. The protein resides in the nucleus. It is found in the nucleolus. Functionally, may play a role in a ERBB3-regulated signal transduction pathway. Seems be involved in growth regulation. Acts a corepressor of the androgen receptor (AR) and is regulated by the ERBB3 ligand neuregulin-1/heregulin (HRG). Inhibits transcription of some E2F1-regulated promoters, probably by recruiting histone acetylase (HAT) activity. Binds RNA. Associates with 28S, 18S and 5.8S mature rRNAs, several rRNA precursors and probably U3 small nucleolar RNA. May be involved in regulation of intermediate and late steps of rRNA processing. May be involved in ribosome assembly. Mediates cap-independent translation of specific viral IRESs (internal ribosomal entry site). Together with PTBP1 is required for the translation initiation on the foot-and-mouth disease virus (FMDV) IRES. Regulates cell proliferation, differentiation, and survival. Isoform 1 suppresses apoptosis whereas isoform 2 promotes cell differentiation. In Rattus norvegicus (Rat), this protein is Proliferation-associated protein 2G4 (Pa2g4).